The sequence spans 179 residues: Large ribosomal subunit protein uL5 (179 aa).

This sequence belongs to the universal ribosomal protein uL5 family. In terms of assembly, part of the 50S ribosomal subunit; part of the 5S rRNA/L5/L18/L25 subcomplex. Contacts the 5S rRNA and the P site tRNA. Forms a bridge to the 30S subunit in the 70S ribosome.

In terms of biological role, this is one of the proteins that bind and probably mediate the attachment of the 5S RNA into the large ribosomal subunit, where it forms part of the central protuberance. In the 70S ribosome it contacts protein S13 of the 30S subunit (bridge B1b), connecting the 2 subunits; this bridge is implicated in subunit movement. Contacts the P site tRNA; the 5S rRNA and some of its associated proteins might help stabilize positioning of ribosome-bound tRNAs. This is Large ribosomal subunit protein uL5 from Pseudomonas savastanoi pv. phaseolicola (strain 1448A / Race 6) (Pseudomonas syringae pv. phaseolicola (strain 1448A / Race 6)).